A 155-amino-acid polypeptide reads, in one-letter code: 6,7-dimethyl-8-ribityllumazine synthase (155 aa).

5-amino-6-(D-ribitylamino)uracil is bound by residues Phe-22, 57–59 (AYE), and 81–83 (SVI). 86 to 87 (GT) lines the (2S)-2-hydroxy-3-oxobutyl phosphate pocket. His-88 functions as the Proton donor in the catalytic mechanism. Phe-113 is a 5-amino-6-(D-ribitylamino)uracil binding site. Arg-127 lines the (2S)-2-hydroxy-3-oxobutyl phosphate pocket.

The protein belongs to the DMRL synthase family. As to quaternary structure, forms an icosahedral capsid composed of 60 subunits, arranged as a dodecamer of pentamers.

The catalysed reaction is (2S)-2-hydroxy-3-oxobutyl phosphate + 5-amino-6-(D-ribitylamino)uracil = 6,7-dimethyl-8-(1-D-ribityl)lumazine + phosphate + 2 H2O + H(+). It participates in cofactor biosynthesis; riboflavin biosynthesis; riboflavin from 2-hydroxy-3-oxobutyl phosphate and 5-amino-6-(D-ribitylamino)uracil: step 1/2. Functionally, catalyzes the formation of 6,7-dimethyl-8-ribityllumazine by condensation of 5-amino-6-(D-ribitylamino)uracil with 3,4-dihydroxy-2-butanone 4-phosphate. This is the penultimate step in the biosynthesis of riboflavin. In Photobacterium phosphoreum, this protein is 6,7-dimethyl-8-ribityllumazine synthase.